Reading from the N-terminus, the 485-residue chain is Probable phosphomannomutase (485 aa).

The Phosphoserine intermediate role is filled by serine 86. Mg(2+) is bound by residues serine 86, aspartate 236, aspartate 238, and aspartate 240.

The protein belongs to the phosphohexose mutase family. Mg(2+) is required as a cofactor.

The enzyme catalyses alpha-D-mannose 1-phosphate = D-mannose 6-phosphate. The protein is Probable phosphomannomutase of Haemophilus influenzae (strain ATCC 51907 / DSM 11121 / KW20 / Rd).